The chain runs to 227 residues: Fibrillarin-like rRNA/tRNA 2'-O-methyltransferase (227 aa).

S-adenosyl-L-methionine contacts are provided by residues 86–87 (TT), 105–106 (EF), 130–131 (DA), and 150–153 (DVAQ).

The protein belongs to the methyltransferase superfamily. Fibrillarin family. Interacts with nop5. Component of box C/D small ribonucleoprotein (sRNP) particles that contain rpl7ae, FlpA and nop5, plus a guide RNA.

In terms of biological role, involved in pre-rRNA and tRNA processing. Utilizes the methyl donor S-adenosyl-L-methionine to catalyze the site-specific 2'-hydroxyl methylation of ribose moieties in rRNA and tRNA. Site specificity is provided by a guide RNA that base pairs with the substrate. Methylation occurs at a characteristic distance from the sequence involved in base pairing with the guide RNA. This is Fibrillarin-like rRNA/tRNA 2'-O-methyltransferase from Pyrococcus horikoshii (strain ATCC 700860 / DSM 12428 / JCM 9974 / NBRC 100139 / OT-3).